A 400-amino-acid polypeptide reads, in one-letter code: Na(+)/H(+) antiporter NhaA (400 aa).

Helical transmembrane passes span 26–46 (AGGILLLFSAVVAMLLANSPL), 71–91 (LIHWINDGFMAVFFVLVGMEV), 107–127 (IFPAIAAIGGMVIPAVVYWFI), 137–157 (GWAIPMATDIAFALGIMALLS), 166–186 (IFLLALAIIDDLGAIVVIALF), 189–209 (HGLSVQALIFSAVAIIVLILL), 212–232 (FKVSALCAYMVVGAILWASVL), 233–253 (KSGVHATLAGVIIGFSIPLKG), 273–293 (FVILPLFAFANAGVSFAGIDV), 299–319 (PLLLAIASGLIIGKPVGIFGF), 340–360 (IFAVAVLCGIGFTMSMFLASL), and 373–393 (LSRLGILLGSTVSAILGYLFL).

Belongs to the NhaA Na(+)/H(+) (TC 2.A.33) antiporter family.

The protein localises to the cell inner membrane. It carries out the reaction Na(+)(in) + 2 H(+)(out) = Na(+)(out) + 2 H(+)(in). Na(+)/H(+) antiporter that extrudes sodium in exchange for external protons. The polypeptide is Na(+)/H(+) antiporter NhaA (Haemophilus influenzae (strain 86-028NP)).